We begin with the raw amino-acid sequence, 316 residues long: 4-diphosphocytidyl-2-C-methyl-D-erythritol kinase (316 aa).

Lysine 32 is an active-site residue. ATP is bound at residue 126-136 (PVGAGLGGGSA). The active site involves aspartate 168.

The protein belongs to the GHMP kinase family. IspE subfamily.

The enzyme catalyses 4-CDP-2-C-methyl-D-erythritol + ATP = 4-CDP-2-C-methyl-D-erythritol 2-phosphate + ADP + H(+). It functions in the pathway isoprenoid biosynthesis; isopentenyl diphosphate biosynthesis via DXP pathway; isopentenyl diphosphate from 1-deoxy-D-xylulose 5-phosphate: step 3/6. Catalyzes the phosphorylation of the position 2 hydroxy group of 4-diphosphocytidyl-2C-methyl-D-erythritol. The polypeptide is 4-diphosphocytidyl-2-C-methyl-D-erythritol kinase (Bifidobacterium longum subsp. infantis (strain ATCC 15697 / DSM 20088 / JCM 1222 / NCTC 11817 / S12)).